The primary structure comprises 234 residues: 1-(5-phosphoribosyl)-5-[(5-phosphoribosylamino)methylideneamino] imidazole-4-carboxamide isomerase (234 aa).

Residue Asp-9 is the Proton acceptor of the active site. Asp-131 functions as the Proton donor in the catalytic mechanism.

This sequence belongs to the HisA/HisF family.

The protein resides in the cytoplasm. It catalyses the reaction 1-(5-phospho-beta-D-ribosyl)-5-[(5-phospho-beta-D-ribosylamino)methylideneamino]imidazole-4-carboxamide = 5-[(5-phospho-1-deoxy-D-ribulos-1-ylimino)methylamino]-1-(5-phospho-beta-D-ribosyl)imidazole-4-carboxamide. Its pathway is amino-acid biosynthesis; L-histidine biosynthesis; L-histidine from 5-phospho-alpha-D-ribose 1-diphosphate: step 4/9. In Staphylococcus aureus (strain bovine RF122 / ET3-1), this protein is 1-(5-phosphoribosyl)-5-[(5-phosphoribosylamino)methylideneamino] imidazole-4-carboxamide isomerase.